Consider the following 195-residue polypeptide: Imidazoleglycerol-phosphate dehydratase (195 aa).

It belongs to the imidazoleglycerol-phosphate dehydratase family.

Its subcellular location is the cytoplasm. It catalyses the reaction D-erythro-1-(imidazol-4-yl)glycerol 3-phosphate = 3-(imidazol-4-yl)-2-oxopropyl phosphate + H2O. The protein operates within amino-acid biosynthesis; L-histidine biosynthesis; L-histidine from 5-phospho-alpha-D-ribose 1-diphosphate: step 6/9. The polypeptide is Imidazoleglycerol-phosphate dehydratase (Frankia casuarinae (strain DSM 45818 / CECT 9043 / HFP020203 / CcI3)).